The following is a 205-amino-acid chain: Small ribosomal subunit protein uS4 (205 aa).

A disordered region spans residues 18–46; that stretch reads NIWGRPKSPVNRREYGPGQHGQRRKGKLS. Residues 94–157 enclose the S4 RNA-binding domain; the sequence is RRLDTVVYRS…KQLAIVLEAN (64 aa).

This sequence belongs to the universal ribosomal protein uS4 family. As to quaternary structure, part of the 30S ribosomal subunit. Contacts protein S5. The interaction surface between S4 and S5 is involved in control of translational fidelity.

Functionally, one of the primary rRNA binding proteins, it binds directly to 16S rRNA where it nucleates assembly of the body of the 30S subunit. With S5 and S12 plays an important role in translational accuracy. This is Small ribosomal subunit protein uS4 from Rhodopseudomonas palustris (strain BisB5).